Reading from the N-terminus, the 611-residue chain is Elongation factor 4 (611 aa).

One can recognise a tr-type G domain in the interval 11-193 (KHIRNFSIVA…KIVKDVPAPT (183 aa)). GTP contacts are provided by residues 23-28 (DHGKST) and 140-143 (NKID).

This sequence belongs to the TRAFAC class translation factor GTPase superfamily. Classic translation factor GTPase family. LepA subfamily.

It is found in the cell membrane. The enzyme catalyses GTP + H2O = GDP + phosphate + H(+). In terms of biological role, required for accurate and efficient protein synthesis under certain stress conditions. May act as a fidelity factor of the translation reaction, by catalyzing a one-codon backward translocation of tRNAs on improperly translocated ribosomes. Back-translocation proceeds from a post-translocation (POST) complex to a pre-translocation (PRE) complex, thus giving elongation factor G a second chance to translocate the tRNAs correctly. Binds to ribosomes in a GTP-dependent manner. The sequence is that of Elongation factor 4 from Limosilactobacillus reuteri (strain DSM 20016) (Lactobacillus reuteri).